The sequence spans 418 residues: GTPase Obg (418 aa).

An Obg domain is found at 1–156 (MKFIDEITLN…KKLTLVLKVL (156 aa)). Residues 157–324 (ADVGFVGKPS…LKEALWQSVK (168 aa)) enclose the OBG-type G domain. Residues 163–170 (GKPSAGKS), 188–192 (FTTLV), 209–212 (DLPG), 278–281 (NKKD), and 305–307 (SAL) contribute to the GTP site. 2 residues coordinate Mg(2+): serine 170 and threonine 190. The 79-residue stretch at 339-417 (VFINFEADFN…IYDYEFVWGN (79 aa)) folds into the OCT domain.

It belongs to the TRAFAC class OBG-HflX-like GTPase superfamily. OBG GTPase family. As to quaternary structure, monomer. It depends on Mg(2+) as a cofactor.

The protein resides in the cytoplasm. Functionally, an essential GTPase which binds GTP, GDP and possibly (p)ppGpp with moderate affinity, with high nucleotide exchange rates and a fairly low GTP hydrolysis rate. Plays a role in control of the cell cycle, stress response, ribosome biogenesis and in those bacteria that undergo differentiation, in morphogenesis control. This is GTPase Obg from Mycoplasmopsis pulmonis (strain UAB CTIP) (Mycoplasma pulmonis).